The chain runs to 168 residues: uncharacterized protein (168 aa).

Residues 23 to 47 (LFARASIIGVALLLSACATVPMASV) form a helical membrane-spanning segment.

The protein localises to the membrane. This is an uncharacterized protein from Haemophilus influenzae (strain ATCC 51907 / DSM 11121 / KW20 / Rd).